Consider the following 105-residue polypeptide: Nucleoid-associated protein TTHA1599 (105 aa).

It belongs to the YbaB/EbfC family. Homodimer.

It localises to the cytoplasm. It is found in the nucleoid. Functionally, binds to DNA and alters its conformation. May be involved in regulation of gene expression, nucleoid organization and DNA protection. The protein is Nucleoid-associated protein TTHA1599 of Thermus thermophilus (strain ATCC 27634 / DSM 579 / HB8).